A 428-amino-acid chain; its full sequence is C4-dicarboxylate transport protein (428 aa).

9 helical membrane passes run 4-24 (SLFKSLYFQVLTAIAIGILLG), 44-64 (LIKMVIAPVIFCTVVTGIAGM), 76-96 (VALLYFEIVSTIALIIGLIIV), 142-162 (IGAFASGNILQVLLFAVMFGF), 184-204 (VIFGIINMIMRLAPIGAFGAM), 222-242 (LIVCFYITCILFVVVVLGSIA), 289-309 (VVGLVIPTGYSFNLDGTSIYL), 326-346 (IFHQVTLLVVLLLSSKGAAGV), and 352-372 (IVLAATISAVGHLPVAGLALI).

This sequence belongs to the dicarboxylate/amino acid:cation symporter (DAACS) (TC 2.A.23) family.

The protein resides in the cell inner membrane. Its function is as follows. Responsible for the transport of dicarboxylates such as succinate, fumarate, and malate from the periplasm across the membrane. The chain is C4-dicarboxylate transport protein from Citrobacter koseri (strain ATCC BAA-895 / CDC 4225-83 / SGSC4696).